Here is a 347-residue protein sequence, read N- to C-terminus: Inositol 2-dehydrogenase (347 aa).

The protein belongs to the Gfo/Idh/MocA family. As to quaternary structure, homotetramer.

It carries out the reaction myo-inositol + NAD(+) = scyllo-inosose + NADH + H(+). Its function is as follows. Involved in the oxidation of myo-inositol (MI) to 2-keto-myo-inositol (2KMI or 2-inosose). This is Inositol 2-dehydrogenase from Rubrobacter xylanophilus (strain DSM 9941 / JCM 11954 / NBRC 16129 / PRD-1).